The following is a 424-amino-acid chain: MFSPVIVSVIFTIAFCDASPARDGFGCSNSGITDKDRQAFLDFHNNARRRVAKGVEDSNSGKLNPAKNMYKLSWDCAMEQQLQDAIQSCPSAFAGIQGVAQNVMSWSSSGGFPDPSVKIEQTLSGWWSGAKKNGVGPDNKYNGGGLFAFSNMVYSETTKLGCAYKVCGTKLAVSCIYNGVGYITNQPMWETGQACKTGADCSTYKNSGCEDGLCTKGPDVPETNQQCPSNTGMTDSVRDTFLSVHNEFRSSVARGLEPDALGGNAPKAAKMLKMVYDCEVEASAIRHGNKCVYQHSHGEDRPGLGENIYKTSVLKFDKNKAAKQASQLWWNELKEFGVGPSNVLTTALWNRPGMQIGHYTQMAWDTTYKLGCAVVFCNDFTFGVCQYGPGGNYMGHVIYTMGQPCSQCSPGATCSVTEGLCSAP.

Residues 1–18 form the signal peptide; that stretch reads MFSPVIVSVIFTIAFCDA. SCP domains lie at 41 to 177 and 242 to 387; these read LDFH…SCIY and LSVH…VCQY.

It belongs to the CRISP family.

It is found in the secreted. In terms of biological role, associated with the transition to parasitism by infective hookworm larvae. This is Ancylostoma secreted protein (ASP) from Ancylostoma caninum (Dog hookworm).